The sequence spans 431 residues: tRNA(Ile)-lysidine synthase (431 aa).

An ATP-binding site is contributed by 25 to 30 (SGGLDS).

The protein belongs to the tRNA(Ile)-lysidine synthase family.

The protein localises to the cytoplasm. It carries out the reaction cytidine(34) in tRNA(Ile2) + L-lysine + ATP = lysidine(34) in tRNA(Ile2) + AMP + diphosphate + H(+). In terms of biological role, ligates lysine onto the cytidine present at position 34 of the AUA codon-specific tRNA(Ile) that contains the anticodon CAU, in an ATP-dependent manner. Cytidine is converted to lysidine, thus changing the amino acid specificity of the tRNA from methionine to isoleucine. The sequence is that of tRNA(Ile)-lysidine synthase from Legionella pneumophila (strain Paris).